We begin with the raw amino-acid sequence, 1113 residues long: Protein MGA2 (1113 aa).

The segment at Thr91–Lys114 is disordered. Position 255 is a phosphoserine (Ser255). Polar residues-rich tracts occupy residues Asp344–Arg357 and His437–Phe452. Disordered stretches follow at residues Asp344–Leu376 and His437–Pro462. Ser467 bears the Phosphoserine mark. The 81-residue stretch at Pro530–Gln610 folds into the IPT/TIG domain. The disordered stretch occupies residues Ile658–Asn687. Positions Ser663–Asn687 are enriched in polar residues. 2 ANK repeats span residues Leu719–Asp748 and Phe752–Leu781. The helical transmembrane segment at Met1037–Ile1054 threads the bilayer.

It is found in the membrane. The polypeptide is Protein MGA2 (MGA2) (Saccharomyces cerevisiae (strain ATCC 204508 / S288c) (Baker's yeast)).